The chain runs to 234 residues: UPF0173 metal-dependent hydrolase RHE_CH01853 (234 aa).

This sequence belongs to the UPF0173 family.

The protein is UPF0173 metal-dependent hydrolase RHE_CH01853 of Rhizobium etli (strain ATCC 51251 / DSM 11541 / JCM 21823 / NBRC 15573 / CFN 42).